The primary structure comprises 120 residues: Large ribosomal subunit protein uL18 (120 aa).

This sequence belongs to the universal ribosomal protein uL18 family. As to quaternary structure, part of the 50S ribosomal subunit; part of the 5S rRNA/L5/L18/L25 subcomplex. Contacts the 5S and 23S rRNAs.

Its function is as follows. This is one of the proteins that bind and probably mediate the attachment of the 5S RNA into the large ribosomal subunit, where it forms part of the central protuberance. The sequence is that of Large ribosomal subunit protein uL18 from Geobacillus sp. (strain WCH70).